Consider the following 388-residue polypeptide: Amylovoran biosynthesis protein AmsL (388 aa).

6 consecutive transmembrane segments (helical) span residues valine 24–phenylalanine 44, leucine 47–leucine 67, phenylalanine 97–phenylalanine 117, phenylalanine 231–isoleucine 251, phenylalanine 297–tryptophan 317, and isoleucine 359–isoleucine 379.

Belongs to the polysaccharide synthase family.

The protein resides in the cell membrane. It functions in the pathway glycan metabolism; exopolysaccharide biosynthesis. In terms of biological role, involved in the biosynthesis of amylovoran which functions as a virulence factor. This Erwinia amylovora (Fire blight bacteria) protein is Amylovoran biosynthesis protein AmsL (amsL).